We begin with the raw amino-acid sequence, 389 residues long: Succinate--CoA ligase [ADP-forming] subunit beta (389 aa).

An ATP-grasp domain is found at 9-236; the sequence is KELFAKHNVP…KDATDPLELK (228 aa). ATP-binding positions include K45, 52–54, S94, and E99; that span reads GRG. Mg(2+) contacts are provided by N191 and D205. Residues N256 and 318–320 each bind substrate; that span reads GIT.

Belongs to the succinate/malate CoA ligase beta subunit family. In terms of assembly, heterotetramer of two alpha and two beta subunits. Mg(2+) is required as a cofactor.

The enzyme catalyses succinate + ATP + CoA = succinyl-CoA + ADP + phosphate. The catalysed reaction is GTP + succinate + CoA = succinyl-CoA + GDP + phosphate. It participates in carbohydrate metabolism; tricarboxylic acid cycle; succinate from succinyl-CoA (ligase route): step 1/1. Succinyl-CoA synthetase functions in the citric acid cycle (TCA), coupling the hydrolysis of succinyl-CoA to the synthesis of either ATP or GTP and thus represents the only step of substrate-level phosphorylation in the TCA. The beta subunit provides nucleotide specificity of the enzyme and binds the substrate succinate, while the binding sites for coenzyme A and phosphate are found in the alpha subunit. This chain is Succinate--CoA ligase [ADP-forming] subunit beta, found in Mycobacteroides abscessus (strain ATCC 19977 / DSM 44196 / CCUG 20993 / CIP 104536 / JCM 13569 / NCTC 13031 / TMC 1543 / L948) (Mycobacterium abscessus).